Reading from the N-terminus, the 238-residue chain is Glutamine amidotransferase-like protein chyE (238 aa).

The Glutamine amidotransferase type-1 domain occupies 8 to 238; the sequence is KIAVLINTPP…LERVLQWLSE (231 aa). The active-site Nucleophile is C102. Catalysis depends on residues H189 and E191.

It belongs to the peptidase C26 family.

It functions in the pathway pigment biosynthesis. In terms of biological role, glutamine amidotransferase-like protein; part of the gene cluster that mediates the biosynthesis of the yellow pigment chrysogine. the NRPS chyA mediates the condensation of anthranilic acid and alanine into the intermediate 2-(2-aminopropanamido)benzoic acid. The remainder of the pathway is highly branched yielding at least 13 chrysogine-related compounds. The malonyl transferase chyE converts 2-(2-aminopropanamido)benzoic acid and 2-(2-aminopropanamido)benzamidine into 2-(2-(2-carboxyacetamido)propanamido)benzoic acid and 3-((1-((2-carbamoylphenyl)amino)-1-oxopropan-2-yl)amino)-3-oxopropanoic acid, respectively. ChyD is an amidase, being responsible for the amidation of the carboxylic acid moiety of 2-(2-aminopropanamido)benzoic acid, 2-(2-(2-carboxyacetamido)propanamido)benzoic acid and 2-(2-((4-amino-1-carboxy-4-oxobutyl)amino)propanamido)benzoic acid. ChyC is involved in the same reactions as ChyD, but plays a more minor role in the amidation reactions compared to chyD. The oxidoreductases chyH and chyM are involved in oxidation reactions that form N-pyruvoylanthranilamide from 2-(2-aminopropanamido)benzamidine and (1-((2-carbamoylphenyl)amino)-1-oxopropan-2-yl)glutamine, respectively. N-pyruvoylanthranilamide is further converted via two further branches in the pathway, yielding chrysogine and additional chrysogine-related coumpounds. Chrysogine is likely formed by a spontaneous ring closure from N-pyruvoylanthranilamide. This is Glutamine amidotransferase-like protein chyE from Penicillium rubens (strain ATCC 28089 / DSM 1075 / NRRL 1951 / Wisconsin 54-1255) (Penicillium chrysogenum).